A 184-amino-acid chain; its full sequence is Photosystem I assembly protein Ycf4 (184 aa).

The next 2 membrane-spanning stretches (helical) occupy residues 19-39 and 57-77; these read ISNFCWAFILFLGSLGFLLVG and IIFFPQGLVMSFYGIAGLFIS.

It belongs to the Ycf4 family.

It is found in the plastid. It localises to the chloroplast thylakoid membrane. Functionally, seems to be required for the assembly of the photosystem I complex. The polypeptide is Photosystem I assembly protein Ycf4 (Nicotiana sylvestris (Wood tobacco)).